Here is a 376-residue protein sequence, read N- to C-terminus: Ribonucleoside-diphosphate reductase 1 subunit beta (376 aa).

Fe cation-binding residues include Asp85, Glu116, and His119. Tyr123 is an active-site residue. Residues Glu205, Glu239, and His242 each coordinate Fe cation.

This sequence belongs to the ribonucleoside diphosphate reductase small chain family. Tetramer of two alpha (R1) and two beta (R2) subunits. The B1 protein is a dimer of alpha subunits. A radical transfer pathway occurs between Tyr-123 of R2 and R1. Fe cation serves as cofactor.

It carries out the reaction a 2'-deoxyribonucleoside 5'-diphosphate + [thioredoxin]-disulfide + H2O = a ribonucleoside 5'-diphosphate + [thioredoxin]-dithiol. In terms of biological role, provides the precursors necessary for DNA synthesis. Catalyzes the biosynthesis of deoxyribonucleotides from the corresponding ribonucleotides. R2 contains the tyrosyl radical required for catalysis. The protein is Ribonucleoside-diphosphate reductase 1 subunit beta (nrdB) of Escherichia coli O157:H7.